The chain runs to 563 residues: Serine carboxypeptidase S10 family member 2 (563 aa).

A signal peptide spans 1-23 (MNIKIILLSIILIIQLLLLNNNG). The Extracellular portion of the chain corresponds to 24 to 529 (GIVESKINFS…VPLTLGAWIG (506 aa)). N31, N95, N110, and N213 each carry an N-linked (GlcNAc...) asparagine glycan. S225 is an active-site residue. 3 N-linked (GlcNAc...) asparagine glycosylation sites follow: N244, N328, and N382. D417 is an active-site residue. A glycan (N-linked (GlcNAc...) asparagine) is linked at N468. H479 is a catalytic residue. N-linked (GlcNAc...) asparagine glycosylation is present at N499. The helical transmembrane segment at 530–550 (ITVGGCAFGFLVGGLIIYIIM) threads the bilayer. Residues 551–563 (KKSSKNGYYKVIQ) are Cytoplasmic-facing.

It belongs to the peptidase S10 family.

Its subcellular location is the membrane. In terms of biological role, probable carboxypeptidase. The sequence is that of Serine carboxypeptidase S10 family member 2 from Dictyostelium discoideum (Social amoeba).